The primary structure comprises 287 residues: Phosphatidylserine decarboxylase proenzyme (287 aa).

Catalysis depends on charge relay system; for autoendoproteolytic cleavage activity residues D90, H147, and S253. Catalysis depends on S253, which acts as the Schiff-base intermediate with substrate; via pyruvic acid; for decarboxylase activity. Residue S253 is modified to Pyruvic acid (Ser); by autocatalysis.

This sequence belongs to the phosphatidylserine decarboxylase family. PSD-B subfamily. Prokaryotic type I sub-subfamily. In terms of assembly, heterodimer of a large membrane-associated beta subunit and a small pyruvoyl-containing alpha subunit. Pyruvate serves as cofactor. In terms of processing, is synthesized initially as an inactive proenzyme. Formation of the active enzyme involves a self-maturation process in which the active site pyruvoyl group is generated from an internal serine residue via an autocatalytic post-translational modification. Two non-identical subunits are generated from the proenzyme in this reaction, and the pyruvate is formed at the N-terminus of the alpha chain, which is derived from the carboxyl end of the proenzyme. The autoendoproteolytic cleavage occurs by a canonical serine protease mechanism, in which the side chain hydroxyl group of the serine supplies its oxygen atom to form the C-terminus of the beta chain, while the remainder of the serine residue undergoes an oxidative deamination to produce ammonia and the pyruvoyl prosthetic group on the alpha chain. During this reaction, the Ser that is part of the protease active site of the proenzyme becomes the pyruvoyl prosthetic group, which constitutes an essential element of the active site of the mature decarboxylase.

It is found in the cell membrane. The enzyme catalyses a 1,2-diacyl-sn-glycero-3-phospho-L-serine + H(+) = a 1,2-diacyl-sn-glycero-3-phosphoethanolamine + CO2. The protein operates within phospholipid metabolism; phosphatidylethanolamine biosynthesis; phosphatidylethanolamine from CDP-diacylglycerol: step 2/2. Catalyzes the formation of phosphatidylethanolamine (PtdEtn) from phosphatidylserine (PtdSer). This is Phosphatidylserine decarboxylase proenzyme from Aliivibrio salmonicida (strain LFI1238) (Vibrio salmonicida (strain LFI1238)).